The following is a 102-amino-acid chain: Putative pterin-4-alpha-carbinolamine dehydratase (102 aa).

The protein belongs to the pterin-4-alpha-carbinolamine dehydratase family.

It carries out the reaction (4aS,6R)-4a-hydroxy-L-erythro-5,6,7,8-tetrahydrobiopterin = (6R)-L-erythro-6,7-dihydrobiopterin + H2O. In Burkholderia lata (strain ATCC 17760 / DSM 23089 / LMG 22485 / NCIMB 9086 / R18194 / 383), this protein is Putative pterin-4-alpha-carbinolamine dehydratase.